The chain runs to 388 residues: LL-diaminopimelate aminotransferase (388 aa).

Substrate-binding residues include tyrosine 13, glycine 38, lysine 102, tyrosine 126, and asparagine 176. Pyridoxal 5'-phosphate-binding positions include 101–102, tyrosine 126, asparagine 176, tyrosine 207, and 235–237; these read SK and SLS. Position 238 is an N6-(pyridoxal phosphate)lysine (lysine 238). Residue arginine 246 coordinates pyridoxal 5'-phosphate. Arginine 364 is a substrate binding site.

This sequence belongs to the class-I pyridoxal-phosphate-dependent aminotransferase family. LL-diaminopimelate aminotransferase subfamily. As to quaternary structure, homodimer. The cofactor is pyridoxal 5'-phosphate.

It catalyses the reaction (2S,6S)-2,6-diaminopimelate + 2-oxoglutarate = (S)-2,3,4,5-tetrahydrodipicolinate + L-glutamate + H2O + H(+). The protein operates within amino-acid biosynthesis; L-lysine biosynthesis via DAP pathway; LL-2,6-diaminopimelate from (S)-tetrahydrodipicolinate (aminotransferase route): step 1/1. In terms of biological role, involved in the synthesis of meso-diaminopimelate (m-DAP or DL-DAP), required for both lysine and peptidoglycan biosynthesis. Catalyzes the direct conversion of tetrahydrodipicolinate to LL-diaminopimelate. The protein is LL-diaminopimelate aminotransferase of Dehalococcoides mccartyi (strain CBDB1).